A 451-amino-acid chain; its full sequence is MEISPTKIKSVLLKLIQILFFTISISIYIDLVGNSNNKNNINNNINNEELLLNKQIQIYYWFVGIILFSIAWSIGTFKWLSRFFLTFFIIKSIQQLIQHLPIEFYDKLRNLIVFGTFSKFDFTSTGIITESLPTLYDNFFGGNISPFSIEIIGIQSCLIIFFSTLGFNIYLADKFWLIKTIIVDWIISAILLIIFSITDLLMNQSNVYSVISYIFGSNVLGFGTIKIQEFLWNLSSKYDDKLNSTIIKSTKSNNNNNNNNNNKQDDNIIYDTDSSFNGQSSSSSSSSSSSSSSSSSATTTTTTLVNDNSIISEYVTEKIMIEENGEIKEQEVQVDKLDYSKLNEDQLNAILSEPILETQITTRNVSYHKSTRFINNLIAPENINSRISAKEFVGVIILWVYTISNFIISDYSLLTIPNILVVVGFSGTILTYLSTISAKRLTNKNPSKREC.

The next 5 membrane-spanning stretches (helical) occupy residues 11 to 31 (VLLKLIQILFFTISISIYIDL), 56 to 76 (IQIYYWFVGIILFSIAWSIGT), 151 to 171 (IIGIQSCLIIFFSTLGFNIYL), 175 to 195 (FWLIKTIIVDWIISAILLIIF), and 207 to 227 (VYSVISYIFGSNVLGFGTIKI). The segment at 250–300 (TKSNNNNNNNNNNKQDDNIIYDTDSSFNGQSSSSSSSSSSSSSSSSSATTT) is disordered. Composition is skewed to low complexity over residues 253–262 (NNNNNNNNNN) and 280–300 (SSSSSSSSSSSSSSSSSATTT). 2 helical membrane passes run 392-412 (FVGVIILWVYTISNFIISDYS) and 413-433 (LLTIPNILVVVGFSGTILTYL).

The protein localises to the membrane. This is an uncharacterized protein from Dictyostelium discoideum (Social amoeba).